The following is a 1399-amino-acid chain: DNA-directed RNA polymerase subunit beta' (1399 aa).

The Zn(2+) site is built by Cys-71, Cys-73, Cys-86, and Cys-89. Mg(2+) contacts are provided by Asp-462, Asp-464, and Asp-466. Zn(2+)-binding residues include Cys-810, Cys-884, Cys-891, and Cys-894. The interval 1379-1399 is disordered; that stretch reads KQAAIVPSQPEPQPLALPPAE. Residues 1387–1399 are compositionally biased toward pro residues; that stretch reads QPEPQPLALPPAE.

This sequence belongs to the RNA polymerase beta' chain family. The RNAP catalytic core consists of 2 alpha, 1 beta, 1 beta' and 1 omega subunit. When a sigma factor is associated with the core the holoenzyme is formed, which can initiate transcription. Mg(2+) serves as cofactor. Zn(2+) is required as a cofactor.

It catalyses the reaction RNA(n) + a ribonucleoside 5'-triphosphate = RNA(n+1) + diphosphate. Functionally, DNA-dependent RNA polymerase catalyzes the transcription of DNA into RNA using the four ribonucleoside triphosphates as substrates. In Bradyrhizobium sp. (strain ORS 278), this protein is DNA-directed RNA polymerase subunit beta'.